A 414-amino-acid chain; its full sequence is Ornithine aminotransferase (414 aa).

Residues Cys-154 and Cys-163 are joined by a disulfide bond. The residue at position 262 (Lys-262) is an N6-(pyridoxal phosphate)lysine.

This sequence belongs to the class-III pyridoxal-phosphate-dependent aminotransferase family. In terms of assembly, homodimer. Pyridoxal 5'-phosphate is required as a cofactor. The disulfide bond between Cys-154 and Cys-163 is reduced by TRX1 which increases OAT catalytic activity.

The protein resides in the cytoplasm. It catalyses the reaction a 2-oxocarboxylate + L-ornithine = L-glutamate 5-semialdehyde + an L-alpha-amino acid. The catalysed reaction is L-ornithine + 2-oxoglutarate = L-glutamate 5-semialdehyde + L-glutamate. It participates in amino-acid biosynthesis; L-proline biosynthesis; L-glutamate 5-semialdehyde from L-ornithine: step 1/1. Its activity is regulated as follows. Unlike for mammalian OATs, activity is increased by TRX1-mediated reduction of the disulfide bond between Cys-154 and Cys-163. Binding to TRX1 may also induce conformational changes that facilitate substrate binding. In terms of biological role, catalyzes the transamination of alpha-ketoglutarate with ornithine or N-acetylornithine and of glutamate-5-semialdehyde with glutamate and alanine. The polypeptide is Ornithine aminotransferase (Plasmodium yoelii yoelii).